The primary structure comprises 390 residues: Delta-aminolevulinic acid dehydratase, chloroplastic (390 aa).

The transit peptide at 1–24 (MQMMQRNVVGQRPVAGSRRSLVVA) directs the protein to the chloroplast. The tract at residues 34–69 (VSTNGKHRTGVPEGTPIVTPQDLPSRPRRNRRSESF) is disordered. The active-site Schiff-base intermediate with substrate is lysine 251. Residues arginine 261 and lysine 281 each contribute to the 5-aminolevulinate site. Mg(2+) is bound at residue glutamate 297. The Schiff-base intermediate with substrate role is filled by lysine 312. Serine 338 and tyrosine 377 together coordinate 5-aminolevulinate.

The protein belongs to the ALAD family. As to quaternary structure, homooctamer. Requires Mg(2+) as cofactor.

Its subcellular location is the plastid. The protein resides in the chloroplast. The enzyme catalyses 2 5-aminolevulinate = porphobilinogen + 2 H2O + H(+). Its pathway is porphyrin-containing compound metabolism; protoporphyrin-IX biosynthesis; coproporphyrinogen-III from 5-aminolevulinate: step 1/4. Catalyzes an early step in the biosynthesis of tetrapyrroles. Binds two molecules of 5-aminolevulinate per subunit, each at a distinct site, and catalyzes their condensation to form porphobilinogen. This Chlamydomonas reinhardtii (Chlamydomonas smithii) protein is Delta-aminolevulinic acid dehydratase, chloroplastic (HEMB).